Reading from the N-terminus, the 377-residue chain is Succinyl-diaminopimelate desuccinylase (377 aa).

Position 66 (His66) interacts with Zn(2+). Residue Asp68 is part of the active site. Asp99 lines the Zn(2+) pocket. Glu133 acts as the Proton acceptor in catalysis. Residues Glu134, Glu162, and His348 each coordinate Zn(2+).

It belongs to the peptidase M20A family. DapE subfamily. In terms of assembly, homodimer. Requires Zn(2+) as cofactor. Co(2+) is required as a cofactor.

The enzyme catalyses N-succinyl-(2S,6S)-2,6-diaminopimelate + H2O = (2S,6S)-2,6-diaminopimelate + succinate. Its pathway is amino-acid biosynthesis; L-lysine biosynthesis via DAP pathway; LL-2,6-diaminopimelate from (S)-tetrahydrodipicolinate (succinylase route): step 3/3. Catalyzes the hydrolysis of N-succinyl-L,L-diaminopimelic acid (SDAP), forming succinate and LL-2,6-diaminopimelate (DAP), an intermediate involved in the bacterial biosynthesis of lysine and meso-diaminopimelic acid, an essential component of bacterial cell walls. In Alcanivorax borkumensis (strain ATCC 700651 / DSM 11573 / NCIMB 13689 / SK2), this protein is Succinyl-diaminopimelate desuccinylase.